Reading from the N-terminus, the 74-residue chain is Protein SlyX homolog (74 aa).

The protein belongs to the SlyX family.

In Neisseria meningitidis serogroup A / serotype 4A (strain DSM 15465 / Z2491), this protein is Protein SlyX homolog.